Reading from the N-terminus, the 219-residue chain is Protein-L-isoaspartate O-methyltransferase (219 aa).

Ser-60 is a catalytic residue.

This sequence belongs to the methyltransferase superfamily. L-isoaspartyl/D-aspartyl protein methyltransferase family.

The protein localises to the cytoplasm. It carries out the reaction [protein]-L-isoaspartate + S-adenosyl-L-methionine = [protein]-L-isoaspartate alpha-methyl ester + S-adenosyl-L-homocysteine. Catalyzes the methyl esterification of L-isoaspartyl residues in peptides and proteins that result from spontaneous decomposition of normal L-aspartyl and L-asparaginyl residues. It plays a role in the repair and/or degradation of damaged proteins. The chain is Protein-L-isoaspartate O-methyltransferase from Rhodospirillum rubrum (strain ATCC 11170 / ATH 1.1.1 / DSM 467 / LMG 4362 / NCIMB 8255 / S1).